Consider the following 218-residue polypeptide: Elongation factor Ts (218 aa).

The tract at residues 82–85 is involved in Mg(2+) ion dislocation from EF-Tu; the sequence is TDFV.

Belongs to the EF-Ts family.

Its subcellular location is the cytoplasm. Its function is as follows. Associates with the EF-Tu.GDP complex and induces the exchange of GDP to GTP. It remains bound to the aminoacyl-tRNA.EF-Tu.GTP complex up to the GTP hydrolysis stage on the ribosome. The sequence is that of Elongation factor Ts from Prochlorococcus marinus (strain MIT 9303).